A 179-amino-acid chain; its full sequence is UPF0167 protein PA1536 (179 aa).

The protein belongs to the UPF0167 family.

This Pseudomonas aeruginosa (strain ATCC 15692 / DSM 22644 / CIP 104116 / JCM 14847 / LMG 12228 / 1C / PRS 101 / PAO1) protein is UPF0167 protein PA1536.